A 558-amino-acid chain; its full sequence is T-complex protein 1 subunit gamma (558 aa).

The cysteines at positions 381 and 387 are disulfide-linked.

It belongs to the TCP-1 chaperonin family. Heterooligomeric complex of about 850 to 900 kDa that forms two stacked rings, 12 to 16 nm in diameter.

It localises to the cytoplasm. In terms of biological role, molecular chaperone; assists the folding of proteins upon ATP hydrolysis. Known to play a role, in vitro, in the folding of actin and tubulin. The sequence is that of T-complex protein 1 subunit gamma from Thalassiosira weissflogii (Marine diatom).